The chain runs to 359 residues: Alkanal monooxygenase alpha chain (359 aa).

It belongs to the bacterial luciferase oxidoreductase family. As to quaternary structure, heterodimer of an alpha and a beta chain.

It catalyses the reaction a long-chain fatty aldehyde + FMNH2 + O2 = a long-chain fatty acid + hnu + FMN + H2O + 2 H(+). Its function is as follows. Light-emitting reaction in luminous bacteria. This is Alkanal monooxygenase alpha chain (luxA) from Photorhabdus laumondii subsp. laumondii (strain DSM 15139 / CIP 105565 / TT01) (Photorhabdus luminescens subsp. laumondii).